Here is a 183-residue protein sequence, read N- to C-terminus: Transmembrane protein 252 (183 aa).

The next 2 membrane-spanning stretches (helical) occupy residues 8–28 (ILCALSLLTGFLMICLGGFFI) and 39–59 (LVVAYVLLPMGFVILLSGIFW).

Its subcellular location is the membrane. The sequence is that of Transmembrane protein 252 (Tmem252) from Mus musculus (Mouse).